The sequence spans 131 residues: Large-conductance mechanosensitive channel (131 aa).

2 helical membrane-spanning segments follow: residues 21 to 41 and 76 to 96; these read VGVI…ADVI and GMFI…FLMI.

It belongs to the MscL family. As to quaternary structure, homopentamer.

It localises to the cell inner membrane. Channel that opens in response to stretch forces in the membrane lipid bilayer. May participate in the regulation of osmotic pressure changes within the cell. The chain is Large-conductance mechanosensitive channel from Histophilus somni (strain 129Pt) (Haemophilus somnus).